The sequence spans 182 residues: uncharacterized protein (182 aa).

A disordered region spans residues 40–182; that stretch reads LLKTDDDDDD…EEIQRNQKGN (143 aa). Low complexity predominate over residues 52 to 86; that stretch reads NNININNNNATITTTSTTTTTTTTSTTKTFTISTD. Residues 87–100 show a composition bias toward acidic residues; it reads NYDEDVNDDQDEGD. Composition is skewed to low complexity over residues 104–134 and 148–157; these read NNNNNNNNNNNNNNNNNNNNNNSNNNNNNNN and DLDFNNQNNN. A compositionally biased stretch (basic and acidic residues) spans 165–182; it reads FLSKDDNIEEIQRNQKGN.

This is an uncharacterized protein from Dictyostelium discoideum (Social amoeba).